The sequence spans 405 residues: Elongation factor Tu (405 aa).

In terms of domain architecture, tr-type G spans 10–215; that stretch reads KPHVNIGTIG…AVDSYIPTPE (206 aa). Positions 19-26 are G1; the sequence is GHVDHGKT. 19-26 contacts GTP; it reads GHVDHGKT. Thr-26 provides a ligand contact to Mg(2+). The interval 61–65 is G2; that stretch reads GITIN. The interval 82 to 85 is G3; it reads DCPG. Residues 82-86 and 137-140 contribute to the GTP site; these read DCPGH and NKVD. A G4 region spans residues 137 to 140; the sequence is NKVD. Residues 175 to 177 form a G5 region; the sequence is SAL.

Belongs to the TRAFAC class translation factor GTPase superfamily. Classic translation factor GTPase family. EF-Tu/EF-1A subfamily. In terms of assembly, monomer.

Its subcellular location is the cytoplasm. The catalysed reaction is GTP + H2O = GDP + phosphate + H(+). In terms of biological role, GTP hydrolase that promotes the GTP-dependent binding of aminoacyl-tRNA to the A-site of ribosomes during protein biosynthesis. This chain is Elongation factor Tu, found in Deinococcus radiodurans (strain ATCC 13939 / DSM 20539 / JCM 16871 / CCUG 27074 / LMG 4051 / NBRC 15346 / NCIMB 9279 / VKM B-1422 / R1).